The chain runs to 249 residues: Diaminopimelate epimerase (249 aa).

2 residues coordinate substrate: Asn-11 and Asn-60. The active-site Proton donor is the Cys-69. Substrate is bound by residues 70-71, Asn-164, and 182-183; these read GN and ER. Residue Cys-192 is the Proton acceptor of the active site. 193-194 is a binding site for substrate; it reads GT.

Belongs to the diaminopimelate epimerase family. Homodimer.

Its subcellular location is the cytoplasm. The catalysed reaction is (2S,6S)-2,6-diaminopimelate = meso-2,6-diaminopimelate. Its pathway is amino-acid biosynthesis; L-lysine biosynthesis via DAP pathway; DL-2,6-diaminopimelate from LL-2,6-diaminopimelate: step 1/1. Catalyzes the stereoinversion of LL-2,6-diaminopimelate (L,L-DAP) to meso-diaminopimelate (meso-DAP), a precursor of L-lysine and an essential component of the bacterial peptidoglycan. The protein is Diaminopimelate epimerase of Campylobacter jejuni subsp. doylei (strain ATCC BAA-1458 / RM4099 / 269.97).